The primary structure comprises 404 residues: Serine palmitoyltransferase (404 aa).

Residues 112 to 113, S185, H213, and T241 contribute to the pyridoxal 5'-phosphate site; that span reads GY. K244 is modified (N6-(pyridoxal phosphate)lysine).

This sequence belongs to the class-II pyridoxal-phosphate-dependent aminotransferase family. Pyridoxal 5'-phosphate is required as a cofactor.

The protein resides in the cytoplasm. It catalyses the reaction L-serine + hexadecanoyl-CoA + H(+) = 3-oxosphinganine + CO2 + CoA. It participates in lipid metabolism; sphingolipid metabolism. Functionally, involved in de novo bacterial ceramide synthesis. Catalyzes the condensation of L-serine with palmitoyl-CoA (hexadecanoyl-CoA) to produce 3-oxosphinganine. Can also condense serine and C16:1-CoA, but shows a preference for palmitoyl-CoA. In Caulobacter vibrioides (strain NA1000 / CB15N) (Caulobacter crescentus), this protein is Serine palmitoyltransferase.